The chain runs to 597 residues: Siderophore iron transporter 2 (597 aa).

Phosphoserine is present on serine 46. The next 14 membrane-spanning stretches (helical) occupy residues 65 to 85, 97 to 117, 131 to 151, 159 to 179, 190 to 210, 225 to 245, 281 to 301, 312 to 332, 357 to 377, 390 to 410, 419 to 439, 448 to 468, 485 to 505, and 558 to 578; these read IIVAYLGLYLLSFASSLEQQT, FSAHSNLATINLVGNILLAVV, SESLSLALGMTVLGYLSLAFS, VAYILYICGQTGLGLLSQLII, ILSAIPELPYLATVWIGPVLA, YGIWAFILPTVSLPLLASLFL, LDGLGIVLFVSGFTLLLLPFS, TILTLFTITLSIALLVTLCFY, VLIFTYFMSYYIFSNFLTSFL, LTLNVFVFSMTTTAILSGFLM, LLMISVPMYVLGILGIILFGI, LVLVLILAGMGGGLLTLSAQI, LYLTFSSVGGAFGSAIAGGVW, and KDLFHISLVASLFMFAGLVII.

It belongs to the major facilitator superfamily.

The protein localises to the membrane. In terms of biological role, involved in the transport of siderophore iron and so has a role in iron homeostasis. In Schizosaccharomyces pombe (strain 972 / ATCC 24843) (Fission yeast), this protein is Siderophore iron transporter 2 (str2).